A 377-amino-acid polypeptide reads, in one-letter code: Hydrogenase maturation factor HypD (377 aa).

Fe cation-binding residues include cysteine 41, cysteine 69, and cysteine 72.

Belongs to the HypD family. The cofactor is [4Fe-4S] cluster.

Its pathway is protein modification; [NiFe] hydrogenase maturation. Involved in the maturation of [NiFe] hydrogenases. Involved in the biosynthesis of the Fe(CN)(2)CO cofactor. In Rhodobacter capsulatus (Rhodopseudomonas capsulata), this protein is Hydrogenase maturation factor HypD.